A 320-amino-acid chain; its full sequence is Methionyl-tRNA formyltransferase (320 aa).

114 to 117 is a binding site for (6S)-5,6,7,8-tetrahydrofolate; it reads SLLP.

It belongs to the Fmt family.

It catalyses the reaction L-methionyl-tRNA(fMet) + (6R)-10-formyltetrahydrofolate = N-formyl-L-methionyl-tRNA(fMet) + (6S)-5,6,7,8-tetrahydrofolate + H(+). Attaches a formyl group to the free amino group of methionyl-tRNA(fMet). The formyl group appears to play a dual role in the initiator identity of N-formylmethionyl-tRNA by promoting its recognition by IF2 and preventing the misappropriation of this tRNA by the elongation apparatus. The polypeptide is Methionyl-tRNA formyltransferase (Acinetobacter baumannii (strain ACICU)).